The chain runs to 353 residues: tRNA-cytidine(32) 2-sulfurtransferase (353 aa).

Residues 49 to 54 (SGGKDS) carry the PP-loop motif motif. [4Fe-4S] cluster is bound by residues Cys124, Cys127, and Cys215.

Belongs to the TtcA family. In terms of assembly, homodimer. The cofactor is Mg(2+). Requires [4Fe-4S] cluster as cofactor.

Its subcellular location is the cytoplasm. It catalyses the reaction cytidine(32) in tRNA + S-sulfanyl-L-cysteinyl-[cysteine desulfurase] + AH2 + ATP = 2-thiocytidine(32) in tRNA + L-cysteinyl-[cysteine desulfurase] + A + AMP + diphosphate + H(+). The protein operates within tRNA modification. Functionally, catalyzes the ATP-dependent 2-thiolation of cytidine in position 32 of tRNA, to form 2-thiocytidine (s(2)C32). The sulfur atoms are provided by the cysteine/cysteine desulfurase (IscS) system. This is tRNA-cytidine(32) 2-sulfurtransferase from Sodalis glossinidius (strain morsitans).